Consider the following 309-residue polypeptide: Uracil phosphoribosyltransferase homolog (309 aa).

Residues 1-38 form a disordered region; that stretch reads MATELQCPDSMPCHNQQVNSASTPSPEQLRPGDLILDH. Polar residues predominate over residues 13–26; that stretch reads CHNQQVNSASTPSP. S25 bears the Phosphoserine mark. Residues R133, R142, and 176–179 contribute to the GTP site; that span reads EKGN. R186 lines the 5-phospho-alpha-D-ribose 1-diphosphate pocket. GTP-binding residues include R203 and R232. 238-246 contributes to the 5-phospho-alpha-D-ribose 1-diphosphate binding site; that stretch reads YPILSTGNT. 299 to 301 contacts uracil; it reads THF.

It belongs to the UPRTase family. Highly expressed in leukocytes, liver, spleen and thymus, with lower expression in brain, lung and skeletal muscle.

The protein resides in the cytoplasm. It is found in the nucleus. The protein is Uracil phosphoribosyltransferase homolog (UPRT) of Homo sapiens (Human).